The sequence spans 208 residues: Ion-translocating oxidoreductase complex subunit G (208 aa).

A helical membrane pass occupies residues G9 to L29. T174 carries the FMN phosphoryl threonine modification.

The protein belongs to the RnfG family. The complex is composed of six subunits: RnfA, RnfB, RnfC, RnfD, RnfE and RnfG. FMN serves as cofactor.

It localises to the cell inner membrane. Functionally, part of a membrane-bound complex that couples electron transfer with translocation of ions across the membrane. This is Ion-translocating oxidoreductase complex subunit G from Cronobacter sakazakii (strain ATCC BAA-894) (Enterobacter sakazakii).